The following is a 397-amino-acid chain: Enoyl-[acyl-carrier-protein] reductase [NADH] (397 aa).

Residues 48–53 (GASTGY), 74–75 (FE), 111–112 (DA), and 139–140 (VA) each bind NAD(+). Residue Tyr225 coordinates substrate. The Proton donor role is filled by Tyr235. Residues Lys244 and 273 to 275 (VVT) contribute to the NAD(+) site.

It belongs to the TER reductase family. As to quaternary structure, monomer.

The enzyme catalyses a 2,3-saturated acyl-[ACP] + NAD(+) = a (2E)-enoyl-[ACP] + NADH + H(+). Its pathway is lipid metabolism; fatty acid biosynthesis. In terms of biological role, involved in the final reduction of the elongation cycle of fatty acid synthesis (FAS II). Catalyzes the reduction of a carbon-carbon double bond in an enoyl moiety that is covalently linked to an acyl carrier protein (ACP). This is Enoyl-[acyl-carrier-protein] reductase [NADH] from Burkholderia mallei (strain SAVP1).